We begin with the raw amino-acid sequence, 214 residues long: LOB domain-containing protein 7 (214 aa).

The LOB domain maps to 12–113; sequence TACAACKHQR…TELNLTRQQI (102 aa).

The protein belongs to the LOB domain-containing protein family.

The sequence is that of LOB domain-containing protein 7 (LBD7) from Arabidopsis thaliana (Mouse-ear cress).